Here is a 131-residue protein sequence, read N- to C-terminus: Large ribosomal subunit protein eL32 (131 aa).

The protein belongs to the eukaryotic ribosomal protein eL32 family.

The polypeptide is Large ribosomal subunit protein eL32 (rpl32e) (Sulfurisphaera tokodaii (strain DSM 16993 / JCM 10545 / NBRC 100140 / 7) (Sulfolobus tokodaii)).